Consider the following 125-residue polypeptide: Class III hydrophobin G (125 aa).

A signal peptide spans 1 to 20 (MKPSIVTFLMLAAVTAAVSA). Disulfide bonds link Cys-54-Cys-107, Cys-60-Cys-101, Cys-61-Cys-94, and Cys-108-Cys-122.

The protein belongs to the fungal hydrophobin family. In terms of assembly, self-assembles to form functional amyloid fibrils called rodlets. Self-assembly into fibrillar rodlets occurs spontaneously at hydrophobic:hydrophilic interfaces and the rodlets further associate laterally to form amphipathic monolayers.

Its subcellular location is the secreted. It is found in the cell wall. Aerial growth, conidiation, and dispersal of filamentous fungi in the environment rely upon a capability of their secreting small amphipathic proteins called hydrophobins (HPBs) with low sequence identity. Class I can self-assemble into an outermost layer of rodlet bundles on aerial cell surfaces, conferring cellular hydrophobicity that supports fungal growth, development and dispersal; whereas Class II form highly ordered films at water-air interfaces through intermolecular interactions but contribute nothing to the rodlet structure. RodF and rodG belong to Class III, which contains hydrophobins with intermediate (between classes I and II) or atypical characteristics. RodG, unlike rodA, is not required for rodlet formation. This Aspergillus fumigatus (strain ATCC MYA-4609 / CBS 101355 / FGSC A1100 / Af293) (Neosartorya fumigata) protein is Class III hydrophobin G.